The primary structure comprises 202 residues: MFTELRSKLSPPRGRAGAVRAGFGERRDVDATAHFSFCRTLLEHTVSAESIPCHLPRTPGTSLTWHDSRSQRAASSRPIKLLQQPGTDTPQGRLYSDHYGLYHTSPSLGGLTRPVVLWSQQDVCKWLKKHCPHNYLVYVEAFSQHAITGRALLRLNAEKLQRMGLAQEAQRQEVLQQVLRLQVREEGRSLQLLSQASFGKMS.

Residues 118–184 (WSQQDVCKWL…LQQVLRLQVR (67 aa)) form the SAM domain.

This Homo sapiens (Human) protein is Sterile alpha motif domain-containing protein 10 (SAMD10).